The sequence spans 386 residues: MKNGAVIIPAAGSGTRMKLDYPKQYHAVAGTPIIVHTIRAFNKHPCIAKIILVVPQDHLEESKALLQKYQLENISIVTGGARRQDSVLRGLQEVPESIDIVLVHDGARPMVSAELISRCYKGAQQYGAVIAAVPVKDTLKRGAGRIVTGTVDREGLWQAQTPQAARKALLVKAFKENGMRNVTDESTLLEGVGIPVTLIEGSETNIKITRPEDLILAENFLREKKEPMQKIRIGHGFDAHQLVEKRRLILGGVEIPYHLGLAGHSDADVLVHALCDALLGAIGAGDIGRHFPDSSDAFKDIYSIRLLESVMQKVGELNYKIGNADISVICQAPKLAPYLKQMQEIIATSCACQISDINIKATTTEKMGYTGRGEGISCHAVVLLQQ.

The segment at 1-231 is 2-C-methyl-D-erythritol 4-phosphate cytidylyltransferase; sequence MKNGAVIIPA…REKKEPMQKI (231 aa). The segment at 232–386 is 2-C-methyl-D-erythritol 2,4-cyclodiphosphate synthase; sequence RIGHGFDAHQ…SCHAVVLLQQ (155 aa). A divalent metal cation-binding residues include aspartate 238 and histidine 240. 4-CDP-2-C-methyl-D-erythritol 2-phosphate contacts are provided by residues 238–240 and 264–265; these read DAH and HS. An a divalent metal cation-binding site is contributed by histidine 272. 4-CDP-2-C-methyl-D-erythritol 2-phosphate is bound by residues 286-288, 362-365, tyrosine 369, and arginine 372; these read DIG and TTTE.

In the N-terminal section; belongs to the IspD/TarI cytidylyltransferase family. IspD subfamily. It in the C-terminal section; belongs to the IspF family. It depends on a divalent metal cation as a cofactor.

It catalyses the reaction 2-C-methyl-D-erythritol 4-phosphate + CTP + H(+) = 4-CDP-2-C-methyl-D-erythritol + diphosphate. The catalysed reaction is 4-CDP-2-C-methyl-D-erythritol 2-phosphate = 2-C-methyl-D-erythritol 2,4-cyclic diphosphate + CMP. The protein operates within isoprenoid biosynthesis; isopentenyl diphosphate biosynthesis via DXP pathway; isopentenyl diphosphate from 1-deoxy-D-xylulose 5-phosphate: step 2/6. It participates in isoprenoid biosynthesis; isopentenyl diphosphate biosynthesis via DXP pathway; isopentenyl diphosphate from 1-deoxy-D-xylulose 5-phosphate: step 4/6. Bifunctional enzyme that catalyzes the formation of 4-diphosphocytidyl-2-C-methyl-D-erythritol from CTP and 2-C-methyl-D-erythritol 4-phosphate (MEP) (IspD), and catalyzes the conversion of 4-diphosphocytidyl-2-C-methyl-D-erythritol 2-phosphate (CDP-ME2P) to 2-C-methyl-D-erythritol 2,4-cyclodiphosphate (ME-CPP) with a corresponding release of cytidine 5-monophosphate (CMP) (IspF). The chain is Bifunctional enzyme IspD/IspF from Desulfotalea psychrophila (strain LSv54 / DSM 12343).